The primary structure comprises 356 residues: Inositol phosphoceramide mannosyltransferase 3 (356 aa).

The helical transmembrane segment at Ile4–Gly24 threads the bilayer. 2 N-linked (GlcNAc...) asparagine glycosylation sites follow: Asn52 and Asn146. 2 helical membrane passes run Phe197 to Ala217 and Trp269 to Gly289. Ser307, Ser353, and Ser355 each carry phosphoserine.

It belongs to the glycosyltransferase 32 family.

It is found in the endoplasmic reticulum membrane. It localises to the golgi apparatus. Its subcellular location is the cis-Golgi network membrane. The protein resides in the trans-Golgi network membrane. Functionally, with imt1 and imt2, is required for the synthesis of mannosylinositol phosphoceramide (MIPC). Catalyzes the addition of mannosyl to inositol phosphoceramide (IPC). MIPC is essential for cell morphology, cell-surface distribution of ergosterol, localization for plasma-membrane transporters, and lipid-raft-mediated endocytosis of plasma membrane proteins to the vacuole. This is Inositol phosphoceramide mannosyltransferase 3 from Schizosaccharomyces pombe (strain 972 / ATCC 24843) (Fission yeast).